A 63-amino-acid polypeptide reads, in one-letter code: Large ribosomal subunit protein uL29 (63 aa).

The protein belongs to the universal ribosomal protein uL29 family.

This is Large ribosomal subunit protein uL29 from Yersinia pseudotuberculosis serotype O:1b (strain IP 31758).